Reading from the N-terminus, the 272-residue chain is Glutamate racemase (272 aa).

Substrate-binding positions include D12 to S13 and Y44 to G45. C75 functions as the Proton donor/acceptor in the catalytic mechanism. A substrate-binding site is contributed by N76–T77. Catalysis depends on C185, which acts as the Proton donor/acceptor. Residue T186–H187 participates in substrate binding.

The protein belongs to the aspartate/glutamate racemases family.

The catalysed reaction is L-glutamate = D-glutamate. It functions in the pathway cell wall biogenesis; peptidoglycan biosynthesis. Its function is as follows. Provides the (R)-glutamate required for cell wall biosynthesis. In Mycobacterium leprae (strain TN), this protein is Glutamate racemase.